Reading from the N-terminus, the 409-residue chain is uncharacterized protein (409 aa).

Over residues 36-50 (HLKAKARAQESDSDR) the composition is skewed to basic and acidic residues. 3 disordered regions span residues 36-67 (HLKA…TFSS), 239-298 (IENT…SSTI), and 338-373 (RSQI…TGPR). The span at 51-67 (PCSSIESSSEPASTFSS) shows a compositional bias: low complexity. A compositionally biased stretch (basic and acidic residues) spans 245–265 (VREESNQEHPPGKQEKTEKHP). Residues 268–281 (LQGSHQAEPETSSK) are compositionally biased toward polar residues. Basic and acidic residues-rich tracts occupy residues 282 to 294 (NSEE…KMDD) and 338 to 350 (RSQI…EGRR).

This is an uncharacterized protein from Homo sapiens (Human).